The following is a 92-amino-acid chain: Large ribosomal subunit protein eL43 (92 aa).

The C4-type zinc finger occupies 39–60 (CQFCGKDAMKRQAVGIWGCKSC).

This sequence belongs to the eukaryotic ribosomal protein eL43 family.

This chain is Large ribosomal subunit protein eL43 (RPL37A), found in Cryptochiton stelleri (Giant gumboot chiton).